We begin with the raw amino-acid sequence, 29 residues long: NAD-reducing hydrogenase HoxS subunit delta (29 aa).

Residues 1-11 show a composition bias toward basic and acidic residues; the sequence is MKHSEKNEIAS. Positions 1-29 are disordered; sequence MKHSEKNEIASHELPTTPLDPVLAAGRES.

The protein belongs to the [NiFe]/[NiFeSe] hydrogenase small subunit family. Tetramer of an alpha and a gamma subunits (flavin-containing dimer), and a delta and a nickel-containing beta subunits (hydrogenase dimer). It depends on [4Fe-4S] cluster as a cofactor. [3Fe-4S] cluster is required as a cofactor. The cofactor is [2Fe-2S] cluster. FMN serves as cofactor. Requires Ni(2+) as cofactor.

The protein resides in the cytoplasm. It carries out the reaction H2 + NAD(+) = NADH + H(+). This chain is NAD-reducing hydrogenase HoxS subunit delta (hoxY), found in Rhodococcus opacus (Nocardia opaca).